The sequence spans 954 residues: Glycine dehydrogenase (decarboxylating) (954 aa).

K704 is subject to N6-(pyridoxal phosphate)lysine.

This sequence belongs to the GcvP family. The glycine cleavage system is composed of four proteins: P, T, L and H. The cofactor is pyridoxal 5'-phosphate.

The enzyme catalyses N(6)-[(R)-lipoyl]-L-lysyl-[glycine-cleavage complex H protein] + glycine + H(+) = N(6)-[(R)-S(8)-aminomethyldihydrolipoyl]-L-lysyl-[glycine-cleavage complex H protein] + CO2. Its function is as follows. The glycine cleavage system catalyzes the degradation of glycine. The P protein binds the alpha-amino group of glycine through its pyridoxal phosphate cofactor; CO(2) is released and the remaining methylamine moiety is then transferred to the lipoamide cofactor of the H protein. The chain is Glycine dehydrogenase (decarboxylating) from Agrobacterium fabrum (strain C58 / ATCC 33970) (Agrobacterium tumefaciens (strain C58)).